The sequence spans 34 residues: Photosystem II reaction center protein M (34 aa).

A helical membrane pass occupies residues 7-27 (GFVASLMFILVPAIFLIVLYI).

Belongs to the PsbM family. In terms of assembly, PSII is composed of 1 copy each of membrane proteins PsbA, PsbB, PsbC, PsbD, PsbE, PsbF, PsbH, PsbI, PsbJ, PsbK, PsbL, PsbM, PsbT, PsbX, PsbY, PsbZ, Psb30/Ycf12, peripheral proteins PsbO, CyanoQ (PsbQ), PsbU, PsbV and a large number of cofactors. It forms dimeric complexes.

It localises to the cellular thylakoid membrane. In terms of biological role, one of the components of the core complex of photosystem II (PSII). PSII is a light-driven water:plastoquinone oxidoreductase that uses light energy to abstract electrons from H(2)O, generating O(2) and a proton gradient subsequently used for ATP formation. It consists of a core antenna complex that captures photons, and an electron transfer chain that converts photonic excitation into a charge separation. This subunit is found at the monomer-monomer interface. The chain is Photosystem II reaction center protein M from Synechococcus sp. (strain CC9902).